A 216-amino-acid polypeptide reads, in one-letter code: Phosphoribosylaminoimidazole-succinocarboxamide synthase (216 aa).

Belongs to the SAICAR synthetase family.

It catalyses the reaction 5-amino-1-(5-phospho-D-ribosyl)imidazole-4-carboxylate + L-aspartate + ATP = (2S)-2-[5-amino-1-(5-phospho-beta-D-ribosyl)imidazole-4-carboxamido]succinate + ADP + phosphate + 2 H(+). It functions in the pathway purine metabolism; IMP biosynthesis via de novo pathway; 5-amino-1-(5-phospho-D-ribosyl)imidazole-4-carboxamide from 5-amino-1-(5-phospho-D-ribosyl)imidazole-4-carboxylate: step 1/2. This Aquifex aeolicus (strain VF5) protein is Phosphoribosylaminoimidazole-succinocarboxamide synthase (purC).